The primary structure comprises 585 residues: Zinc finger protein 496 (585 aa).

Residues 1–41 (MPTALCPRVLAPKESEEPRKMRSPPGENPSPQGEPPSPESS) are disordered. Positions 11-20 (APKESEEPRK) are enriched in basic and acidic residues. Lys-13 is covalently cross-linked (Glycyl lysine isopeptide (Lys-Gly) (interchain with G-Cter in SUMO2)). The span at 26 to 38 (GENPSPQGEPPSP) shows a compositional bias: pro residues. The region spanning 42 to 124 (RRLFRRFRYQ…AAVEALEREP (83 aa)) is the SCAN box domain. Residues 141–167 (DDGDGPAAPQDLEQERMSAESQSYPDA) form a disordered region. Ser-182 carries the phosphoserine modification. The region spanning 220–294 (SPFKDMILCF…DLQDKEIPQA (75 aa)) is the KRAB domain. The tract at residues 358-397 (SSSGDEDSQHSPYCTEELRSPPEDLHSVPAHQSNASAEGE) is disordered. Positions 373–383 (EELRSPPEDLH) are enriched in basic and acidic residues. Polar residues predominate over residues 387–397 (AHQSNASAEGE). The C2H2-type 1; degenerate zinc-finger motif lies at 405-427 (YVCPNCGKIFRWRVNFIRHLRSR). 2 C2H2-type zinc fingers span residues 433–455 (HKCS…LETH) and 461–483 (YRCT…RRIH). Residues 483-506 (HLQPASQQPMKKSEEEALETEGTG) are disordered. Lys-494 is covalently cross-linked (Glycyl lysine isopeptide (Lys-Gly) (interchain with G-Cter in SUMO2)). 2 C2H2-type zinc fingers span residues 520–543 (FQCG…RHCH) and 551–573 (FQCR…ERLH). The Nuclear localization signal signature appears at 575 to 579 (KRRSK).

It belongs to the krueppel C2H2-type zinc-finger protein family. In terms of assembly, interacts (via zinc-fingers) with JARID2. Interacts with NSD1.

It is found in the nucleus. Its function is as follows. DNA-binding transcription factor that can both act as an activator and a repressor. In Mus musculus (Mouse), this protein is Zinc finger protein 496 (Znf496).